An 89-amino-acid polypeptide reads, in one-letter code: Small ribosomal subunit protein bS20 (89 aa).

It belongs to the bacterial ribosomal protein bS20 family.

Functionally, binds directly to 16S ribosomal RNA. This chain is Small ribosomal subunit protein bS20, found in Helicobacter acinonychis (strain Sheeba).